Consider the following 868-residue polypeptide: Leucine-rich repeat receptor-like serine/threonine-protein kinase At2g14510 (868 aa).

Residues 1-23 (METRNKFMLLACATFSIMSLVKS) form the signal peptide. Residues 24-510 (QNQQGFISLD…KHQPKSWLVA (487 aa)) lie on the Extracellular side of the membrane. N-linked (GlcNAc...) asparagine glycosylation is found at Asn-48, Asn-68, Asn-231, Asn-235, Asn-258, Asn-291, Asn-433, and Asn-446. LRR repeat units follow at residues 412–435 (RIISLDLSLSGLTGVISPSIQNLT), 436–458 (MLRELDLSNNNLTGEVPEFLATI), and 460–482 (PLLVIHLRGNNLRGSVPQALQDR). Asn-495 carries N-linked (GlcNAc...) asparagine glycosylation. Residues 511 to 531 (IVASISCVAVTIIVLVLIFIF) traverse the membrane as a helical segment. The Cytoplasmic portion of the chain corresponds to 532–868 (RRRKSSTRKV…TFISDIPSAR (337 aa)). The 270-residue stretch at 563–832 (NNFEVVLGKG…NMTRVAHELN (270 aa)) folds into the Protein kinase domain. Residues 569–577 (LGKGGFGVV) and Lys-590 each bind ATP. Tyr-635 is modified (phosphotyrosine). Catalysis depends on Asp-687, which acts as the Proton acceptor. Ser-721 bears the Phosphoserine mark. 2 positions are modified to phosphothreonine: Thr-722 and Thr-727. A Phosphotyrosine modification is found at Tyr-735.

It belongs to the protein kinase superfamily. Ser/Thr protein kinase family.

It localises to the cell membrane. It carries out the reaction L-seryl-[protein] + ATP = O-phospho-L-seryl-[protein] + ADP + H(+). The enzyme catalyses L-threonyl-[protein] + ATP = O-phospho-L-threonyl-[protein] + ADP + H(+). The protein is Leucine-rich repeat receptor-like serine/threonine-protein kinase At2g14510 of Arabidopsis thaliana (Mouse-ear cress).